A 373-amino-acid chain; its full sequence is MAQESPKNSAAEIPVTSNGEVDDSREHSFNRDLKHSLPSGLGLSETQITSHGFDNTKEGVIEAGAFQGSPAPPLPSVMSPSRVAASRLAQQGSDLIVPAGGQRTQTKSGPVILADEIKNPAMEKLELVRKWSLNTYKCTRQIISEKLGRGSRTVDLELEAQIDILRDNKKKYENILKLAQTLSTQLFQMVHTQRQLGDAFADLSLKSLELHEEFGYNADTQKLLAKNGETLLGAINFFIASVNTLVNKTIEDTLMTVKQYESARIEYDAYRTDLEELNLGPRDANTLPKIEQSQHLFQAHKEKYDKMRNDVSVKLKFLEENKVKVLHNQLVLFHNAIAAYFAGNQKQLEQTLKQFHIKLKTPGVDAPSWLEEQ.

A disordered region spans residues 1-47 (MAQESPKNSAAEIPVTSNGEVDDSREHSFNRDLKHSLPSGLGLSETQ). The residue at position 2 (A2) is an N-acetylalanine. A phosphoserine mark is found at S5, S28, S36, S39, S69, S79, and S132. The span at 22 to 35 (DDSREHSFNRDLKH) shows a compositional bias: basic and acidic residues. The AH domain occupies 153–353 (TVDLELEAQI…NQKQLEQTLK (201 aa)). A Phosphothreonine modification is found at T361.

In terms of assembly, forms homodimers or heterodimers with ARFIP2. Interacts with non-myristoylated GTP-bound ARF3, but not to GDP-bound ARF3. Interacts with ARF1. Binds with lower affinity to ARF5 and with very little affinity to ARF6. Interacts with ARL1. Interacts with ATG9A. Post-translationally, phosphorylated by PRKD1; phosphorylation delocalizes ARFIP1 from the Golgi and disrupts its ability to inhibit the activity of ADP-ribosylation factor, an important component of the vesicle scission machinery. As to expression, ubiquitously expressed. Higher levels in liver, pancreas, placenta, skeletal muscle and heart.

It localises to the golgi apparatus. The protein localises to the trans-Golgi network membrane. In terms of biological role, plays a role in controlling biogenesis of secretory granules at the trans-Golgi network. Mechanistically, binds ARF-GTP at the neck of a growing secretory granule precursor and forms a protective scaffold. Once the granule precursor has been completely loaded, active PRKD1 phosphorylates ARFIP1 and releases it from ARFs. In turn, ARFs induce fission. Through this mechanism, ensures proper secretory granule formation at the Golgi of pancreatic beta cells. The chain is Arfaptin-1 from Homo sapiens (Human).